A 142-amino-acid polypeptide reads, in one-letter code: Large ribosomal subunit protein uL11 (142 aa).

The protein belongs to the universal ribosomal protein uL11 family. As to quaternary structure, part of the ribosomal stalk of the 50S ribosomal subunit. Interacts with L10 and the large rRNA to form the base of the stalk. L10 forms an elongated spine to which L12 dimers bind in a sequential fashion forming a multimeric L10(L12)X complex. One or more lysine residues are methylated.

In terms of biological role, forms part of the ribosomal stalk which helps the ribosome interact with GTP-bound translation factors. The chain is Large ribosomal subunit protein uL11 from Enterobacter sp. (strain 638).